Here is a 358-residue protein sequence, read N- to C-terminus: Glutamine synthetase (358 aa).

One can recognise a GS beta-grasp domain in the interval 26-105 (ILAEYIWIDG…VLAECWNADG (80 aa)). A GS catalytic domain is found at 112–358 (HRHECAKIME…IMMETICGGI (247 aa)).

This sequence belongs to the glutamine synthetase family. In terms of assembly, homooctamer.

It is found in the cytoplasm. The enzyme catalyses L-glutamate + NH4(+) + ATP = L-glutamine + ADP + phosphate + H(+). This chain is Glutamine synthetase (GLN1), found in Tuber borchii (White truffle).